The primary structure comprises 260 residues: Adenosylcobinamide-GDP ribazoletransferase (260 aa).

6 helical membrane passes run 43 to 63 (LVGT…QFIF), 64 to 84 (PASV…GGFH), 117 to 137 (GSLA…ELAL), 143 to 163 (VAGG…SIIF), 197 to 217 (VICL…TLFV), and 237 to 257 (TLGA…LLLW).

It belongs to the CobS family. Mg(2+) is required as a cofactor.

Its subcellular location is the cell inner membrane. The enzyme catalyses alpha-ribazole + adenosylcob(III)inamide-GDP = adenosylcob(III)alamin + GMP + H(+). The catalysed reaction is alpha-ribazole 5'-phosphate + adenosylcob(III)inamide-GDP = adenosylcob(III)alamin 5'-phosphate + GMP + H(+). The protein operates within cofactor biosynthesis; adenosylcobalamin biosynthesis; adenosylcobalamin from cob(II)yrinate a,c-diamide: step 7/7. Functionally, joins adenosylcobinamide-GDP and alpha-ribazole to generate adenosylcobalamin (Ado-cobalamin). Also synthesizes adenosylcobalamin 5'-phosphate from adenosylcobinamide-GDP and alpha-ribazole 5'-phosphate. In Shewanella amazonensis (strain ATCC BAA-1098 / SB2B), this protein is Adenosylcobinamide-GDP ribazoletransferase.